The chain runs to 491 residues: Aspartyl/glutamyl-tRNA(Asn/Gln) amidotransferase subunit B (491 aa).

The protein belongs to the GatB/GatE family. GatB subfamily. Heterotrimer of A, B and C subunits.

The enzyme catalyses L-glutamyl-tRNA(Gln) + L-glutamine + ATP + H2O = L-glutaminyl-tRNA(Gln) + L-glutamate + ADP + phosphate + H(+). It carries out the reaction L-aspartyl-tRNA(Asn) + L-glutamine + ATP + H2O = L-asparaginyl-tRNA(Asn) + L-glutamate + ADP + phosphate + 2 H(+). Allows the formation of correctly charged Asn-tRNA(Asn) or Gln-tRNA(Gln) through the transamidation of misacylated Asp-tRNA(Asn) or Glu-tRNA(Gln) in organisms which lack either or both of asparaginyl-tRNA or glutaminyl-tRNA synthetases. The reaction takes place in the presence of glutamine and ATP through an activated phospho-Asp-tRNA(Asn) or phospho-Glu-tRNA(Gln). The sequence is that of Aspartyl/glutamyl-tRNA(Asn/Gln) amidotransferase subunit B from Burkholderia lata (strain ATCC 17760 / DSM 23089 / LMG 22485 / NCIMB 9086 / R18194 / 383).